The primary structure comprises 146 residues: MSTKKERLDAICGIIQTKVISNQEELLKELEDSGFSVTQATLSRDIKQLKVAKVHDGNGDYVYRLPEESISKQAQPEGKKKPNIEFSGNLAVVKTRPGYAMGIASDIDSHAPSEILATIAGDDTILVIPRNGVSQEKVIAALSHFI.

This sequence belongs to the ArgR family.

The protein localises to the cytoplasm. Its pathway is amino-acid biosynthesis; L-arginine biosynthesis [regulation]. Functionally, regulates arginine biosynthesis genes. The sequence is that of Arginine repressor from Parabacteroides distasonis (strain ATCC 8503 / DSM 20701 / CIP 104284 / JCM 5825 / NCTC 11152).